A 71-amino-acid polypeptide reads, in one-letter code: UPF0346 protein BCE_2336 (71 aa).

This sequence belongs to the UPF0346 family.

This Bacillus cereus (strain ATCC 10987 / NRS 248) protein is UPF0346 protein BCE_2336.